We begin with the raw amino-acid sequence, 90 residues long: MARVAVVVKVYPDDVSIDPKTLAERIKSKLPSGYEVLAEGEEPIAFGLKALKLVIAMNEDTEGGTEEVEQLLKNIEGVQEVEVENVSRMQ.

The protein belongs to the EF-1-beta/EF-1-delta family.

Its function is as follows. Promotes the exchange of GDP for GTP in EF-1-alpha/GDP, thus allowing the regeneration of EF-1-alpha/GTP that could then be used to form the ternary complex EF-1-alpha/GTP/AAtRNA. This is Elongation factor 1-beta (ef1b) from Aeropyrum pernix (strain ATCC 700893 / DSM 11879 / JCM 9820 / NBRC 100138 / K1).